A 233-amino-acid chain; its full sequence is 1-(5-phosphoribosyl)-5-[(5-phosphoribosylamino)methylideneamino] imidazole-4-carboxamide isomerase (233 aa).

Catalysis depends on Asp-8, which acts as the Proton acceptor. Asp-125 serves as the catalytic Proton donor.

The protein belongs to the HisA/HisF family.

It is found in the cytoplasm. It catalyses the reaction 1-(5-phospho-beta-D-ribosyl)-5-[(5-phospho-beta-D-ribosylamino)methylideneamino]imidazole-4-carboxamide = 5-[(5-phospho-1-deoxy-D-ribulos-1-ylimino)methylamino]-1-(5-phospho-beta-D-ribosyl)imidazole-4-carboxamide. It participates in amino-acid biosynthesis; L-histidine biosynthesis; L-histidine from 5-phospho-alpha-D-ribose 1-diphosphate: step 4/9. This Thermococcus kodakarensis (strain ATCC BAA-918 / JCM 12380 / KOD1) (Pyrococcus kodakaraensis (strain KOD1)) protein is 1-(5-phosphoribosyl)-5-[(5-phosphoribosylamino)methylideneamino] imidazole-4-carboxamide isomerase.